The following is a 391-amino-acid chain: E3 ubiquitin-protein ligase RMND5A (391 aa).

Residue methionine 1 is modified to N-acetylmethionine. The LisH domain occupies 114-146; sequence SQRLLNEVMVEHFFRQGMLDVAEELCQESGLSV. Residues 153-210 enclose the CTLH domain; it reads PFVELNRILEALKVRVLRPALEWAVSNREMLIAQNSSLEFKLHRLYFISLLMGGTTNQ. An RING-Gid-type zinc finger spans residues 336–377; it reads CPILRQQTTDNNPPMKLVCGHIISRDALNKMFNGSKLKCPYC.

As to quaternary structure, identified in the CTLH complex that contains GID4, RANBP9 and/or RANBP10, MKLN1, MAEA, RMND5A (or alternatively its paralog RMND5B), GID8, ARMC8, WDR26 and YPEL5. Within this complex, MAEA, RMND5A (or alternatively its paralog RMND5B), GID8, WDR26, and RANBP9 and/or RANBP10 form the catalytic core, while GID4, MKLN1, ARMC8 and YPEL5 have ancillary roles.

Its subcellular location is the nucleus. The protein localises to the nucleoplasm. It localises to the cytoplasm. The enzyme catalyses S-ubiquitinyl-[E2 ubiquitin-conjugating enzyme]-L-cysteine + [acceptor protein]-L-lysine = [E2 ubiquitin-conjugating enzyme]-L-cysteine + N(6)-ubiquitinyl-[acceptor protein]-L-lysine.. In terms of biological role, core component of the CTLH E3 ubiquitin-protein ligase complex that selectively accepts ubiquitin from UBE2H and mediates ubiquitination and subsequent proteasomal degradation of the transcription factor HBP1. MAEA and RMND5A are both required for catalytic activity of the CTLH E3 ubiquitin-protein ligase complex. Catalytic activity of the complex is required for normal cell proliferation. The CTLH E3 ubiquitin-protein ligase complex is not required for the degradation of enzymes involved in gluconeogenesis, such as FBP1. The sequence is that of E3 ubiquitin-protein ligase RMND5A (Rmnd5a) from Mus musculus (Mouse).